Consider the following 1076-residue polypeptide: Cytadherence high molecular weight protein 3 (1076 aa).

Positions 264–284 (QGYDQGYDQQYDQQGYDQQGY) are fibronectin-binding. Residues 326–335 (QQPVEVAKPA) show a composition bias toward low complexity. The tract at residues 326–351 (QQPVEVAKPAPTKPVGPKPQPGKKAT) is disordered. Residues 336-345 (PTKPVGPKPQ) are compositionally biased toward pro residues. Residues 562 to 616 (EITKLEELVEIKTDNTESLNKLETLIDENKKIIDQFKQLKEEAKKSNSNINLEKV) are a coiled coil. 2 disordered regions span residues 789-808 (SREH…TTRI) and 850-873 (RINP…EQQP). The span at 797 to 806 (PKAQHQQPTT) shows a compositional bias: polar residues. The segment covering 862 to 873 (YEQPDPYQEQQP) has biased composition (low complexity).

The protein localises to the cell projection. It is found in the attachment organelle membrane. Binds immobilized fibronectin. In terms of biological role, component of the cytoskeleton-like structure which stabilizes the shape of the wall-less mycoplasma. This cytoskeleton-like network of accessory proteins containing HMW proteins 1 to 5 allows the proper anchoring of cytadhesin proteins in the mycoplasmal membrane at the attachment organelle. Essential for successful surface parasitism. The protein is Cytadherence high molecular weight protein 3 (hlp3) of Mycoplasmoides gallisepticum (strain R(low / passage 15 / clone 2)) (Mycoplasma gallisepticum).